A 1894-amino-acid polypeptide reads, in one-letter code: MPLPPLSSRTLLLLLLLLLRGVWIAISSPPAGLGPQPAFRTFVASDWGLTHLVVHEQTGEVYVGAVNRIYKLSGNLTLLRAHVTGPVEDNEKCYPPPSVQSCPHGLGSTDNVNKLLLLDYAANRLLACGSASQGICQFLRLDDLFKLGEPHHRKEHYLSSVREAGSMAGVLIAGPPGQGQAKLFVGTPIDGKSEYFPTLSSRRLMANEEDADMFGFVYQDEFVSSQLKIPSDTLSKFPAFDIYYVYSFRSEQFVYYLTLQLDTQLTSPDAAGEHFFTSKIVRLCVNDPKFYSYVEFPIGCEQAGVEYRLVQDAYLSRPGQALAKQLGLAEDEEVLFTVFAQGQKNRVKPPKESALCLFTLRAIKEKIKERIQSCYRGEGKLSLPWLLNKELGCINSPLQIDDDFCGQDFNQPLGGTVTIEGTPLFVDKEDGLTAVAAYDYQGRTVVFAGTRSGRIRKILVDLANPSGRPALAYESVVAQEGNPILRDLVLSPNRQYLYAMTEKQVTQVPVESCVQYTSCELCLGSRDPHCGWCVLHSICSRQDACERAEEPQRFASDLLQCVQLTVQPRNVSVTMSQVPLVLQAWNVPDLSAGVNCSFEDFTETESILEDGRIHCHSPSAREVAPITQGQGDQRVVKLYLKSKETGKKFASVDFVFYNCSVHQSCLACVNGSFPCHWCKYRHVCTNNAADCAFLEGRVNMSEDCPQILPSTHIYVPVGVVKPITLAARNLPQPQSGQRGYECLFHIPGSPARVTALRFNSSSLQCQNSSYSYEGNDVSDLPVNLSVVWNGNFVIDNPQNIQAHLYKCPALRQSCGLCLKADPRFECGWCVAERRCSLRHHCPADSPASWMHAHHGSSRCTDPKILKLSPETGPRQGGTRLTITGENLGLRFEDVRLGVHVGKVLCSPVESEYISAEQIVCEIGDASTLRAHDALVEVCVRDCSLHYRALSPKRFTFVTPTFYRVSPSRGPLSGGTWIGIEGSHLNAGSDVAVSIGGRPCSFSWRNSREIRCLTPPGHTPGSAPIVININRAQLSNPEVKYNYTEDPTILRIDPEWSINSGGTLLTVTGTNLATVREPRIRAKYGGIERENSCMVYNDTTMVCRAPSIDNPKRSPPELGERPDEIGFIMDNVRTLLVLNSSSFLYYPDPVLEPLSPTGLLELKPSSPLILKGRNLLPPAPGNSRLNYTVLIGSTPCILTVSETQLLCEAPNLTGQHKVTVRAGGFEFSPGMLQVYSDSLLTLPAIVGIGGGGGLLLLVIVAVLIAYKRKSRDADRTLKRLQLQMDNLESRVALECKEAFAELQTDIHELTSDLDGAGIPFLDYRTYAMRVLFPGIEDHPVLKEMEVQANVEKSLTLFGQLLTKKHFLLTFIRTLEAQRSFSMRDRGNVASLIMTALQGEMEYATGVLKQLLSDLIEKNLESKNHPKLLLRRTESVAEKMLTNWFTFLLYKFLKECAGEPLFMLYCAIKQQMEKGPIDAITGEARYSLSEDKLIRQQIDYKTLTLNCVNPEHENAPEVPVKGLNCDTVTQVKEKLLDAVYKGVPYSQRPKAGDMDLEWRQGRMARIILQDEDVTTKIDNDWKRLNTLAHYQVTDGSSVALVPKQTSAYNISNSSTFTKSLSRYESMLRTASSPDSLRSRTPMITPDLESGTKLWHLVKNHDHLDQREGDRGSKMVSEIYLTRLLATKGTLQKFVDDLFETIFSTAHRGSALPLAIKYMFDFLDEQADKHQIHDSDVRHTWKSNCLPLRFWVNVIKNPQFVFDIHKNSITDACLSVVAQTFMDSCSTSEHKLGKDSPSNKLLYAKDIPNYKSWVERYYADIAKMPAISDQDMSAYLAEQSRLHLSQFNSMSALHEIYSYIAKYKDEILVALEKDEQARRQRLRSKLEQVVDTMALSS.

Residues 1 to 27 (MPLPPLSSRTLLLLLLLLLRGVWIAIS) form the signal peptide. The Sema domain occupies 28–510 (SPPAGLGPQP…TEKQVTQVPV (483 aa)). At 28–1242 (SPPAGLGPQP…VYSDSLLTLP (1215 aa)) the chain is on the extracellular side. N75 carries an N-linked (GlcNAc...) asparagine glycan. 10 disulfides stabilise this stretch: C93–C102, C128–C136, C284–C405, C300–C356, C374–C393, C513–C530, C519–C561, C522–C539, C533–C545, and C596–C615. 3 N-linked (GlcNAc...) asparagine glycosylation sites follow: N658, N670, and N699. IPT/TIG domains follow at residues 862-957 (PKIL…FTFV), 959-1043 (PTFY…YNYT), 1046-1145 (PTIL…FLYY), and 1148-1234 (PVLE…LQVY). Residue N1041 is glycosylated (N-linked (GlcNAc...) asparagine). Residues N1185 and N1210 are each glycosylated (N-linked (GlcNAc...) asparagine). Residues 1243–1263 (AIVGIGGGGGLLLLVIVAVLI) traverse the membrane as a helical segment. The stretch at 1262–1315 (LIAYKRKSRDADRTLKRLQLQMDNLESRVALECKEAFAELQTDIHELTSDLDGA) forms a coiled coil. Topologically, residues 1264-1894 (AYKRKSRDAD…QVVDTMALSS (631 aa)) are cytoplasmic.

Belongs to the plexin family. In terms of assembly, interacts directly with NRP1 and NRP2. Interacts with PLXN1B. Interacts with FARP2, RND1 and KDR/VEGFR2. Binding of SEMA3A leads to dissociation of FARP2. Interacts with CRMP1, DPYSL2/CRMP2, DPYSL3/CRMP3 and DPYSL4/CRMP4. Interacts (via TIG domains) with TREM2; the interaction mediates SEMA6D binding and signaling through TYROBP. In terms of tissue distribution, ubiquitous.

The protein resides in the cell membrane. Its function is as follows. Coreceptor for SEMA3A, SEMA3C, SEMA3F and SEMA6D. Necessary for signaling by class 3 semaphorins and subsequent remodeling of the cytoskeleton. Plays a role in axon guidance, invasive growth and cell migration. Class 3 semaphorins bind to a complex composed of a neuropilin and a plexin. The plexin modulates the affinity of the complex for specific semaphorins, and its cytoplasmic domain is required for the activation of down-stream signaling events in the cytoplasm. Acts as coreceptor of TREM2 for SEMA6D in dendritic cells and is involved in the generation of immune responses and skeletal homeostasis. In Mus musculus (Mouse), this protein is Plexin-A1 (Plxna1).